Here is a 471-residue protein sequence, read N- to C-terminus: Glutamate--tRNA ligase (471 aa).

A 'HIGH' region motif is present at residues 10-20 (PSPTGFLHIGG). A disordered region spans residues 117 to 137 (GRPPRYDGRWRDRPASERPTD). The 'KMSKS' region motif lies at 239 to 243 (KLSKR). ATP is bound at residue K242.

The protein belongs to the class-I aminoacyl-tRNA synthetase family. Glutamate--tRNA ligase type 1 subfamily. As to quaternary structure, monomer.

Its subcellular location is the cytoplasm. It catalyses the reaction tRNA(Glu) + L-glutamate + ATP = L-glutamyl-tRNA(Glu) + AMP + diphosphate. Functionally, catalyzes the attachment of glutamate to tRNA(Glu) in a two-step reaction: glutamate is first activated by ATP to form Glu-AMP and then transferred to the acceptor end of tRNA(Glu). This Azorhizobium caulinodans (strain ATCC 43989 / DSM 5975 / JCM 20966 / LMG 6465 / NBRC 14845 / NCIMB 13405 / ORS 571) protein is Glutamate--tRNA ligase.